Here is a 68-residue protein sequence, read N- to C-terminus: Large ribosomal subunit protein uL29 (68 aa).

The protein belongs to the universal ribosomal protein uL29 family.

This chain is Large ribosomal subunit protein uL29, found in Parvibaculum lavamentivorans (strain DS-1 / DSM 13023 / NCIMB 13966).